A 388-amino-acid polypeptide reads, in one-letter code: N-acetylneuraminate epimerase (388 aa).

The signal sequence occupies residues 1–26 (MFSLIRAKRLAIGIAALAWSTGAVMA). Kelch repeat units follow at residues 48–92 (MAYV…AAAG), 94–147 (KIFA…VGLA), 149–186 (GRIAIFGGYNKELFDKYLADVGAIDKDKEPEAYRKLVD), 187–232 (SYMG…ATMG), 236–285 (FLLV…VAGA), 307–356 (ANAA…DAPG), and 358–387 (LLVVGGEDRDGKARKEVFLLKWDGKALSVE). Residue Glu242 is the Proton acceptor of the active site.

The protein belongs to the NanM family. As to quaternary structure, homodimer.

The protein resides in the periplasm. It catalyses the reaction N-acetyl-alpha-neuraminate = N-acetyl-beta-neuraminate. In terms of biological role, converts alpha-N-acetylneuranimic acid (Neu5Ac) to the beta-anomer, accelerating the equilibrium between the alpha- and beta-anomers. Probably facilitates sialidase-negative bacteria to compete successfully for limited amounts of extracellular Neu5Ac, which is likely taken up in the beta-anomer. In addition, the rapid removal of sialic acid from solution might be advantageous to the bacterium to damp down host responses. The protein is N-acetylneuraminate epimerase of Brucella melitensis biotype 1 (strain ATCC 23456 / CCUG 17765 / NCTC 10094 / 16M).